Consider the following 395-residue polypeptide: Acetate kinase (395 aa).

A Mg(2+)-binding site is contributed by asparagine 7. Residue lysine 14 coordinates ATP. Arginine 88 lines the substrate pocket. Residue aspartate 145 is the Proton donor/acceptor of the active site. ATP is bound by residues histidine 205–glycine 209, aspartate 279–arginine 281, and glycine 327–asparagine 331. Glutamate 381 provides a ligand contact to Mg(2+).

This sequence belongs to the acetokinase family. As to quaternary structure, homodimer. Mg(2+) serves as cofactor. Mn(2+) is required as a cofactor.

The protein localises to the cytoplasm. It carries out the reaction acetate + ATP = acetyl phosphate + ADP. The protein operates within metabolic intermediate biosynthesis; acetyl-CoA biosynthesis; acetyl-CoA from acetate: step 1/2. In terms of biological role, catalyzes the formation of acetyl phosphate from acetate and ATP. Can also catalyze the reverse reaction. The sequence is that of Acetate kinase from Campylobacter jejuni subsp. jejuni serotype O:6 (strain 81116 / NCTC 11828).